The following is a 79-amino-acid chain: Sulfur carrier protein TusA (79 aa).

Cys17 functions as the Cysteine persulfide intermediate in the catalytic mechanism.

The protein belongs to the sulfur carrier protein TusA family.

The protein resides in the cytoplasm. In terms of biological role, sulfur carrier protein which probably makes part of a sulfur-relay system. In Actinobacillus pleuropneumoniae serotype 5b (strain L20), this protein is Sulfur carrier protein TusA.